Consider the following 91-residue polypeptide: Small ribosomal subunit protein uS15 (91 aa).

It belongs to the universal ribosomal protein uS15 family. In terms of assembly, part of the 30S ribosomal subunit. Forms a bridge to the 50S subunit in the 70S ribosome, contacting the 23S rRNA.

Functionally, one of the primary rRNA binding proteins, it binds directly to 16S rRNA where it helps nucleate assembly of the platform of the 30S subunit by binding and bridging several RNA helices of the 16S rRNA. Its function is as follows. Forms an intersubunit bridge (bridge B4) with the 23S rRNA of the 50S subunit in the ribosome. This is Small ribosomal subunit protein uS15 from Synechococcus sp. (strain JA-3-3Ab) (Cyanobacteria bacterium Yellowstone A-Prime).